Reading from the N-terminus, the 439-residue chain is 26S proteasome regulatory subunit 6A (439 aa).

Methionine 1 is modified (N-acetylmethionine). Phosphoserine is present on serine 9. 227–234 contributes to the ATP binding site; sequence GPPGTGKT. Serine 376 carries the phosphoserine modification.

The protein belongs to the AAA ATPase family. Component of the 19S proteasome regulatory particle complex. The 26S proteasome consists of a 20S core particle (CP) and two 19S regulatory subunits (RP). The regulatory particle is made of a lid composed of 9 subunits, a base containing 6 ATPases including PSMC3 and few additional components. Interacts with PAAF1. In terms of assembly, (Microbial infection) Interacts with HIV-1 Tat. Post-translationally, sumoylated by UBE2I in response to MEKK1-mediated stimuli.

The protein resides in the cytoplasm. The protein localises to the nucleus. Functionally, component of the 26S proteasome, a multiprotein complex involved in the ATP-dependent degradation of ubiquitinated proteins. This complex plays a key role in the maintenance of protein homeostasis by removing misfolded or damaged proteins, which could impair cellular functions, and by removing proteins whose functions are no longer required. Therefore, the proteasome participates in numerous cellular processes, including cell cycle progression, apoptosis, or DNA damage repair. PSMC3 belongs to the heterohexameric ring of AAA (ATPases associated with diverse cellular activities) proteins that unfolds ubiquitinated target proteins that are concurrently translocated into a proteolytic chamber and degraded into peptides. This is 26S proteasome regulatory subunit 6A (PSMC3) from Homo sapiens (Human).